The chain runs to 297 residues: Protein COFACTOR ASSEMBLY OF COMPLEX C SUBUNIT B CCB4, chloroplastic (297 aa).

The N-terminal 33 residues, 1-33 (MEARIILLRIQIPWSANRQFSHPPLDFPRFIRA), are a transit peptide targeting the chloroplast. Over 34–70 (SSSSTSQKPKTYEGPKPRKNLVADFISKNDDLVRSLP) the chain is Stromal. A helical transmembrane segment spans residues 71 to 91 (IYVGGASLLAVLFNRTVSGIA). The Lumenal portion of the chain corresponds to 92 to 103 (PVADASSSQSRA). A helical membrane pass occupies residues 104-124 (DLLALGLAVTNLLTGLVWLSI). Over 125 to 297 (RPKSITPVNP…DSDEISRVTV (173 aa)) the chain is Stromal.

It is found in the plastid. The protein resides in the chloroplast thylakoid membrane. Required for the biogenesis and accumulation of native cytochrome b6 in the thylakoid membrane. Controls the conversion of apocytochrome b6 to holocytochrome b6. Required for covalent binding of the c-type heme to cytochrome b6. This is Protein COFACTOR ASSEMBLY OF COMPLEX C SUBUNIT B CCB4, chloroplastic from Arabidopsis thaliana (Mouse-ear cress).